Reading from the N-terminus, the 384-residue chain is MTNSSSTSTSTTTGGSLLLLCEEEESWAGRRIPVSLLYSGLAIGGTLANGMVIYLVSSFRKLQTTSNAFIVNGCAADLSVCALWMPQEAVLGLLPSGSAEPPGDWDGGGGSYRLLRGGLLGLGLTVSLLSHCLVALNRYLLITRAPATYQVLYQRRHTVGMLALSWALALGLVLLLPPWAPKPGAEPPQVHYPALLAAGALLAQTALLLHCYLGIVRRVRVSVKRVSVLNFHLLHQLPGCAAAAAAFPAAPHAPGPGGAAHPAQPQPLPAALQPRRAQRRLSGLSVLLLCCVFLLATQPLVWVSLASGFSLPVPWGVQAASWLLCCALSALNPLLYTWRNEEFRRSVRSVLPGVGDAAAAAAAATAVPAMSQAQLGTRAAGQHW.

Residues 1 to 35 (MTNSSSTSTSTTTGGSLLLLCEEEESWAGRRIPVS) are Extracellular-facing. Asn3 carries an N-linked (GlcNAc...) asparagine glycan. The chain crosses the membrane as a helical span at residues 36-56 (LLYSGLAIGGTLANGMVIYLV). At 57–73 (SSFRKLQTTSNAFIVNG) the chain is on the cytoplasmic side. The helical transmembrane segment at 74 to 94 (CAADLSVCALWMPQEAVLGLL) threads the bilayer. Over 95 to 116 (PSGSAEPPGDWDGGGGSYRLLR) the chain is Extracellular. The helical transmembrane segment at 117 to 136 (GGLLGLGLTVSLLSHCLVAL) threads the bilayer. Over 137 to 158 (NRYLLITRAPATYQVLYQRRHT) the chain is Cytoplasmic. The chain crosses the membrane as a helical span at residues 159–179 (VGMLALSWALALGLVLLLPPW). At 180–195 (APKPGAEPPQVHYPAL) the chain is on the extracellular side. A helical membrane pass occupies residues 196–216 (LAAGALLAQTALLLHCYLGIV). The Cytoplasmic portion of the chain corresponds to 217–285 (RRVRVSVKRV…RAQRRLSGLS (69 aa)). The helical transmembrane segment at 286–306 (VLLLCCVFLLATQPLVWVSLA) threads the bilayer. The Extracellular portion of the chain corresponds to 307 to 310 (SGFS). A helical membrane pass occupies residues 311–331 (LPVPWGVQAASWLLCCALSAL). Residues 332-384 (NPLLYTWRNEEFRRSVRSVLPGVGDAAAAAAAATAVPAMSQAQLGTRAAGQHW) are Cytoplasmic-facing.

Belongs to the G-protein coupled receptor 1 family. In terms of tissue distribution, expressed predominantly in the striatum.

The protein resides in the cell membrane. Its subcellular location is the cell projection. It is found in the cilium membrane. The protein localises to the cytoplasm. It localises to the nucleus. Its function is as follows. Orphan G protein-coupled receptor implicated in a large repertoire of behavioral responses that engage motor activities, spatial learning, and emotional processing. May play a role in the regulation of cognitive and motor function. Couples with the heterotrimeric G protein complex of the G(i) subfamily, consisting of GNAI1, GNB1 and GNG2, thereby acting through a G(i)-mediated pathway. Plays a role in the attenuation of D1 dopamine receptor (D1R)-mediated cAMP response in ciliated cells. In on-ciliated cells, involved in the inhibition of the beta-2 adrenergic receptor (B2AR) response. The chain is G protein-coupled receptor 88 (Gpr88) from Mus musculus (Mouse).